We begin with the raw amino-acid sequence, 248 residues long: Pyridoxine 5'-phosphate synthase (248 aa).

N12 provides a ligand contact to 3-amino-2-oxopropyl phosphate. Residue D14–H15 coordinates 1-deoxy-D-xylulose 5-phosphate. 3-amino-2-oxopropyl phosphate is bound at residue R23. Catalysis depends on H48, which acts as the Proton acceptor. The 1-deoxy-D-xylulose 5-phosphate site is built by R50 and H55. Catalysis depends on E75, which acts as the Proton acceptor. T105 contributes to the 1-deoxy-D-xylulose 5-phosphate binding site. Catalysis depends on H196, which acts as the Proton donor. 3-amino-2-oxopropyl phosphate contacts are provided by residues G197 and G218–H219.

The protein belongs to the PNP synthase family. Homooctamer; tetramer of dimers.

It is found in the cytoplasm. It carries out the reaction 3-amino-2-oxopropyl phosphate + 1-deoxy-D-xylulose 5-phosphate = pyridoxine 5'-phosphate + phosphate + 2 H2O + H(+). Its pathway is cofactor biosynthesis; pyridoxine 5'-phosphate biosynthesis; pyridoxine 5'-phosphate from D-erythrose 4-phosphate: step 5/5. Its function is as follows. Catalyzes the complicated ring closure reaction between the two acyclic compounds 1-deoxy-D-xylulose-5-phosphate (DXP) and 3-amino-2-oxopropyl phosphate (1-amino-acetone-3-phosphate or AAP) to form pyridoxine 5'-phosphate (PNP) and inorganic phosphate. The protein is Pyridoxine 5'-phosphate synthase of Ectopseudomonas mendocina (strain ymp) (Pseudomonas mendocina).